The sequence spans 238 residues: Lipid transferase CIDEC (238 aa).

Positions 1 to 35 (MEYAMKSLSLLYPKSLSRHVSVRTSVVTQQLLSEP) are required for liquid-liquid phase separation (LLPS). One can recognise a CIDE-N domain in the interval 41-118 (RARPCRVSTA…VLQKGQKWQP (78 aa)).

Belongs to the CIDE family. In terms of assembly, homodimer. Homooligomer; undergoes liquid-liquid phase separation (LLPS) via its N-terminus, facilitating lipid droplet fusion, occurs at the lipid droplet contact sites. Interacts with CIDEA. Interacts with PLIN1. Interacts with NFAT5; this interaction is direct and retains NFAT5 in the cytoplasm. Interacts with CEBPB. Interacts with isoform CLSTN3beta of CLSTN3; inhibiting the lipid transferase activity of CIDEC. In terms of processing, ubiquitinated and targeted to proteasomal degradation, resulting in a short half-life (about 15 minutes in 3T3-L1 cells). Protein stability depends on triaclyglycerol synthesis, fatty acid availability and lipid droplet formation. As to expression, expressed mainly in adipose tissue, small intestine, heart, colon and stomach and, at lower levels, in brain, kidney and liver.

The protein resides in the lipid droplet. It is found in the endoplasmic reticulum. Its subcellular location is the nucleus. The catalysed reaction is a triacyl-sn-glycerol(in) = a triacyl-sn-glycerol(out). Its function is as follows. Lipid transferase specifically expressed in white adipose tissue, which promotes unilocular lipid droplet formation by mediating lipid droplet fusion. Lipid droplet fusion promotes their enlargement, restricting lipolysis and favoring lipid storage. Localizes on the lipid droplet surface, at focal contact sites between lipid droplets, and mediates atypical lipid droplet fusion by undergoing liquid-liquid phase separation (LLPS) and promoting directional net neutral lipid transfer from the smaller to larger lipid droplets. The transfer direction may be driven by the internal pressure difference between the contacting lipid droplet pair. Its role in neutral lipid transfer and lipid droplet enlargement is activated by the interaction with PLIN1. May also act as a CEBPB coactivator in the white adipose tissue to control the expression of a subset of CEBPB downstream target genes, including SOCS1, SOCS3, TGFB1, TGFBR1, ID2 and XDH. When overexpressed in preadipocytes, induces apoptosis or increases cell susceptibility to apoptosis induced by serum deprivation or TGFB treatment. In Homo sapiens (Human), this protein is Lipid transferase CIDEC.